The primary structure comprises 158 residues: MLLFALLLAMELPLVAASATMRAQWTYSLRCHDCAVINDFNCPNIRVCPYHIRRCMTISIRINSRELLVYKNCTNNCTFVYAAEQPPEAPGKIFKTNSFYWVCCCNSMVCNAGGPTNLERDMLPDEVTEEELPEGTVRLGVSKLLLSFASIIVSNILP.

A signal peptide spans 1–17 (MLLFALLLAMELPLVAA). In terms of domain architecture, UPAR/Ly6 spans 29-134 (LRCHDCAVIN…DEVTEEELPE (106 aa)). Intrachain disulfides connect Cys31-Cys55, Cys34-Cys42, Cys48-Cys73, Cys77-Cys104, and Cys105-Cys110.

It is found in the cell membrane. Its function is as follows. May play a role in the apoptotic pathway or cell-cycle regulation induced by p53/TP53 after DNA damage. The polypeptide is Glycosyl-phosphatidylinositol-anchored molecule-like protein (GML) (Homo sapiens (Human)).